The sequence spans 129 residues: Fluoride-specific ion channel FluC 2 (129 aa).

Residues 19–39 (GLGLVVPAAAVGGFPLGTLFI) traverse the membrane as a helical segment. 2 residues coordinate Na(+): Gly74 and Thr77. Residues 95-115 (FGMAAVYIAASLFGGLLASWA) traverse the membrane as a helical segment.

It belongs to the fluoride channel Fluc/FEX (TC 1.A.43) family.

Its subcellular location is the cell membrane. The catalysed reaction is fluoride(in) = fluoride(out). With respect to regulation, na(+) is not transported, but it plays an essential structural role and its presence is essential for fluoride channel function. Fluoride-specific ion channel. Important for reducing fluoride concentration in the cell, thus reducing its toxicity. This chain is Fluoride-specific ion channel FluC 2, found in Geobacillus kaustophilus (strain HTA426).